A 184-amino-acid chain; its full sequence is NADH-quinone oxidoreductase subunit B (184 aa).

4 residues coordinate [4Fe-4S] cluster: cysteine 37, cysteine 38, cysteine 103, and cysteine 132.

It belongs to the complex I 20 kDa subunit family. In terms of assembly, NDH-1 is composed of 14 different subunits. Subunits NuoB, C, D, E, F, and G constitute the peripheral sector of the complex. The cofactor is [4Fe-4S] cluster.

The protein resides in the cell membrane. It carries out the reaction a quinone + NADH + 5 H(+)(in) = a quinol + NAD(+) + 4 H(+)(out). Its function is as follows. NDH-1 shuttles electrons from NADH, via FMN and iron-sulfur (Fe-S) centers, to quinones in the respiratory chain. The immediate electron acceptor for the enzyme in this species is believed to be a menaquinone. Couples the redox reaction to proton translocation (for every two electrons transferred, four hydrogen ions are translocated across the cytoplasmic membrane), and thus conserves the redox energy in a proton gradient. The polypeptide is NADH-quinone oxidoreductase subunit B (Rhodococcus jostii (strain RHA1)).